A 451-amino-acid chain; its full sequence is Methionine aminopeptidase 2-2 (451 aa).

Positions 1 to 101 (MAAKVADDVA…IDEVFPNDSY (101 aa)) are disordered. The span at 37–51 (EHEDSDDDNEAEEGA) shows a compositional bias: acidic residues. A compositionally biased stretch (basic residues) spans 60–73 (KKKKKRKPRKKKKA). Position 204 (histidine 204) interacts with substrate. Aspartate 224, aspartate 235, and histidine 304 together coordinate a divalent metal cation. Histidine 312 is a binding site for substrate. Positions 337 and 432 each coordinate a divalent metal cation.

Belongs to the peptidase M24A family. Methionine aminopeptidase eukaryotic type 2 subfamily. Co(2+) serves as cofactor. The cofactor is Zn(2+). Requires Mn(2+) as cofactor. It depends on Fe(2+) as a cofactor.

Its subcellular location is the cytoplasm. It catalyses the reaction Release of N-terminal amino acids, preferentially methionine, from peptides and arylamides.. In terms of biological role, cotranslationally removes the N-terminal methionine from nascent proteins. The N-terminal methionine is often cleaved when the second residue in the primary sequence is small and uncharged (Met-Ala-, Cys, Gly, Pro, Ser, Thr, or Val). This is Methionine aminopeptidase 2-2 from Pyrenophora tritici-repentis (strain Pt-1C-BFP) (Wheat tan spot fungus).